Here is a 363-residue protein sequence, read N- to C-terminus: Spermatogenesis-associated protein 22 (363 aa).

Composition is skewed to polar residues over residues 1 to 12 and 145 to 157; these read MKRSLNENSARS and SCPM…QQKQ. Disordered regions lie at residues 1 to 51 and 145 to 169; these read MKRS…DNYD and SCPM…LPRN.

In terms of assembly, component of a multiprotein complex with MEIOB and RPA2. Interacts with MEIOB. Interacts with the complex BRME1:HSF2BP:BRCA2. As to expression, expressed in testis.

Its subcellular location is the chromosome. Meiosis-specific protein required for homologous recombination in meiosis I. This Macaca fascicularis (Crab-eating macaque) protein is Spermatogenesis-associated protein 22 (SPATA22).